The chain runs to 239 residues: Ribonuclease PH (239 aa).

Phosphate contacts are provided by residues R86 and 124-126 (GTR).

This sequence belongs to the RNase PH family. Homohexameric ring arranged as a trimer of dimers.

It carries out the reaction tRNA(n+1) + phosphate = tRNA(n) + a ribonucleoside 5'-diphosphate. Functionally, phosphorolytic 3'-5' exoribonuclease that plays an important role in tRNA 3'-end maturation. Removes nucleotide residues following the 3'-CCA terminus of tRNAs; can also add nucleotides to the ends of RNA molecules by using nucleoside diphosphates as substrates, but this may not be physiologically important. Probably plays a role in initiation of 16S rRNA degradation (leading to ribosome degradation) during starvation. This Sinorhizobium fredii (strain NBRC 101917 / NGR234) protein is Ribonuclease PH.